The sequence spans 201 residues: Ras-related protein Rab-5A (201 aa).

GTP contacts are provided by residues 16 to 24, 35 to 41, 64 to 68, 122 to 125, and 152 to 154; these read GEAAVGKSS, LDYQEST, DTAGQ, NKLD, and SAK. Residues 38–46 carry the Effector region motif; it reads QESTIGAAF. Residues C199 and C200 are each lipidated (S-geranylgeranyl cysteine).

Belongs to the small GTPase superfamily. Rab family.

It localises to the cell membrane. Its subcellular location is the endosome membrane. Its activity is regulated as follows. Regulated by guanine nucleotide exchange factors (GEFs) which promote the exchange of bound GDP for free GTP. In terms of biological role, required for the fusion of plasma membranes and early endosomes. The chain is Ras-related protein Rab-5A (rab5A) from Dictyostelium discoideum (Social amoeba).